The following is a 413-amino-acid chain: Putative zinc finger protein B0310.2 (413 aa).

Disordered regions lie at residues 130-151 and 259-290; these read PIFS…KRSL and VESD…TGPM. Polar residues predominate over residues 270–281; it reads PSPSTGDITENE. 2 C2H2-type zinc fingers span residues 306–330 and 336–358; these read FICM…MFIH and HTCP…KKTH.

It localises to the nucleus. This Caenorhabditis elegans protein is Putative zinc finger protein B0310.2.